The chain runs to 30 residues: Varv peptide B (30 aa).

Positions 1 to 30 form a cross-link, cyclopeptide (Gly-Asn); the sequence is GLPVCGETCFGGTCNTPGCSCDPWPMCSRN. Intrachain disulfides connect Cys5–Cys19, Cys9–Cys21, and Cys14–Cys27.

Post-translationally, this is a cyclic peptide.

Probably participates in a plant defense mechanism. The chain is Varv peptide B from Viola arvensis (European field pansy).